The following is a 444-amino-acid chain: Probable glycine dehydrogenase (decarboxylating) subunit 1 (444 aa).

Belongs to the GcvP family. N-terminal subunit subfamily. As to quaternary structure, the glycine cleavage system is composed of four proteins: P, T, L and H. In this organism, the P 'protein' is a heterodimer of two subunits.

The catalysed reaction is N(6)-[(R)-lipoyl]-L-lysyl-[glycine-cleavage complex H protein] + glycine + H(+) = N(6)-[(R)-S(8)-aminomethyldihydrolipoyl]-L-lysyl-[glycine-cleavage complex H protein] + CO2. Its function is as follows. The glycine cleavage system catalyzes the degradation of glycine. The P protein binds the alpha-amino group of glycine through its pyridoxal phosphate cofactor; CO(2) is released and the remaining methylamine moiety is then transferred to the lipoamide cofactor of the H protein. This chain is Probable glycine dehydrogenase (decarboxylating) subunit 1, found in Chlorobaculum tepidum (strain ATCC 49652 / DSM 12025 / NBRC 103806 / TLS) (Chlorobium tepidum).